The primary structure comprises 527 residues: Peptide chain release factor 3 (527 aa).

The region spanning 9 to 277 (AKRRTFAIIS…AVVDWAPRPL (269 aa)) is the tr-type G domain. GTP contacts are provided by residues 18-25 (SHPDAGKT), 86-90 (DTPGH), and 140-143 (NKLD).

Belongs to the TRAFAC class translation factor GTPase superfamily. Classic translation factor GTPase family. PrfC subfamily.

It is found in the cytoplasm. Functionally, increases the formation of ribosomal termination complexes and stimulates activities of RF-1 and RF-2. It binds guanine nucleotides and has strong preference for UGA stop codons. It may interact directly with the ribosome. The stimulation of RF-1 and RF-2 is significantly reduced by GTP and GDP, but not by GMP. The sequence is that of Peptide chain release factor 3 from Pseudomonas fluorescens (strain Pf0-1).